A 42-amino-acid polypeptide reads, in one-letter code: Protein Tat (42 aa).

The interaction with human CREBBP stretch occupies residues 1–24 (MEPVDPNLEPWNHPGSQPKTACNQ). The tract at residues 22–37 (CNQCYCKKCSYHCLVC) is cysteine-rich. K28 carries the post-translational modification N6-acetyllysine; by host PCAF.

This sequence belongs to the lentiviruses Tat family. Interacts with host CCNT1. Associates with the P-TEFb complex composed at least of Tat, P-TEFb (CDK9 and CCNT1), TAR RNA, RNA Pol II. Recruits the HATs CREBBP, TAF1/TFIID, EP300, PCAF and GCN5L2. Interacts with host KAT5/Tip60; this interaction targets the latter to degradation. Interacts with the host deacetylase SIRT1. Interacts with host capping enzyme RNGTT; this interaction stimulates RNGTT. Binds to host KDR, and to the host integrins ITGAV/ITGB3 and ITGA5/ITGB1. Interacts with host KPNB1/importin beta-1 without previous binding to KPNA1/importin alpha-1. Interacts with EIF2AK2. Interacts with host nucleosome assembly protein NAP1L1; this interaction may be required for the transport of Tat within the nucleus, since the two proteins interact at the nuclear rim. Interacts with host C1QBP/SF2P32; this interaction involves lysine-acetylated Tat. Interacts with the host chemokine receptors CCR2, CCR3 and CXCR4. Interacts with host DPP4/CD26; this interaction may trigger an anti-proliferative effect. Interacts with host LDLR. Interacts with the host extracellular matrix metalloproteinase MMP1. Interacts with host PRMT6; this interaction mediates Tat's methylation. Interacts with, and is ubiquitinated by MDM2/Hdm2. Interacts with host PSMC3 and HTATIP2. Interacts with STAB1; this interaction may overcome SATB1-mediated repression of IL2 and IL2RA (interleukin) in T cells by binding to the same domain than HDAC1. Interacts (when acetylated) with human CDK13, thereby increasing HIV-1 mRNA splicing and promoting the production of the doubly spliced HIV-1 protein Nef. Interacts with host TBP; this interaction modulates the activity of transcriptional pre-initiation complex. Interacts with host RELA. Interacts with host PLSCR1; this interaction negatively regulates Tat transactivation activity by altering its subcellular distribution. Phosphorylated by EIF2AK2 on serine and threonine residues adjacent to the basic region important for TAR RNA binding and function. Phosphorylation of Tat by EIF2AK2 is dependent on the prior activation of EIF2AK2 by dsRNA. In terms of processing, asymmetrical arginine methylation by host PRMT6 seems to diminish the transactivation capacity of Tat and affects the interaction with host CCNT1. Post-translationally, polyubiquitination by host MDM2 does not target Tat to degradation, but activates its transactivation function and fosters interaction with CCNT1 and TAR RNA.

It localises to the host nucleus. The protein localises to the host nucleolus. The protein resides in the host cytoplasm. Its subcellular location is the secreted. In terms of biological role, transcriptional activator that increases RNA Pol II processivity, thereby increasing the level of full-length viral transcripts. Recognizes a hairpin structure at the 5'-LTR of the nascent viral mRNAs referred to as the transactivation responsive RNA element (TAR) and recruits the cyclin T1-CDK9 complex (P-TEFb complex) that will in turn hyperphosphorylate the RNA polymerase II to allow efficient elongation. The CDK9 component of P-TEFb and other Tat-activated kinases hyperphosphorylate the C-terminus of RNA Pol II that becomes stabilized and much more processive. Other factors such as HTATSF1/Tat-SF1, SUPT5H/SPT5, and HTATIP2 are also important for Tat's function. Besides its effect on RNA Pol II processivity, Tat induces chromatin remodeling of proviral genes by recruiting the histone acetyltransferases (HATs) CREBBP, EP300 and PCAF to the chromatin. This also contributes to the increase in proviral transcription rate, especially when the provirus integrates in transcriptionally silent region of the host genome. To ensure maximal activation of the LTR, Tat mediates nuclear translocation of NF-kappa-B by interacting with host RELA. Through its interaction with host TBP, Tat may also modulate transcription initiation. Tat can reactivate a latently infected cell by penetrating in it and transactivating its LTR promoter. In the cytoplasm, Tat is thought to act as a translational activator of HIV-1 mRNAs. Extracellular circulating Tat can be endocytosed by surrounding uninfected cells via the binding to several surface receptors such as CD26, CXCR4, heparan sulfate proteoglycans (HSPG) or LDLR. Neurons are rarely infected, but they internalize Tat via their LDLR. Through its interaction with nuclear HATs, Tat is potentially able to control the acetylation-dependent cellular gene expression. Modulates the expression of many cellular genes involved in cell survival, proliferation or in coding for cytokines or cytokine receptors. Tat plays a role in T-cell and neurons apoptosis. Tat induced neurotoxicity and apoptosis probably contribute to neuroAIDS. Circulating Tat also acts as a chemokine-like and/or growth factor-like molecule that binds to specific receptors on the surface of the cells, affecting many cellular pathways. In the vascular system, Tat binds to ITGAV/ITGB3 and ITGA5/ITGB1 integrins dimers at the surface of endothelial cells and competes with bFGF for heparin-binding sites, leading to an excess of soluble bFGF. The protein is Protein Tat of Human immunodeficiency virus type 1 group M subtype C (isolate ETH2220) (HIV-1).